A 245-amino-acid polypeptide reads, in one-letter code: tRNA pseudouridine synthase A (245 aa).

The active-site Nucleophile is Asp52. Tyr111 provides a ligand contact to substrate.

Belongs to the tRNA pseudouridine synthase TruA family. As to quaternary structure, homodimer.

The enzyme catalyses uridine(38/39/40) in tRNA = pseudouridine(38/39/40) in tRNA. Its function is as follows. Formation of pseudouridine at positions 38, 39 and 40 in the anticodon stem and loop of transfer RNAs. The protein is tRNA pseudouridine synthase A of Wolbachia sp. subsp. Drosophila simulans (strain wRi).